A 478-amino-acid chain; its full sequence is Argininosuccinate lyase (478 aa).

Belongs to the lyase 1 family. Argininosuccinate lyase subfamily.

The protein resides in the cytoplasm. It catalyses the reaction 2-(N(omega)-L-arginino)succinate = fumarate + L-arginine. The protein operates within amino-acid biosynthesis; L-arginine biosynthesis; L-arginine from L-ornithine and carbamoyl phosphate: step 3/3. This Rhodospirillum rubrum (strain ATCC 11170 / ATH 1.1.1 / DSM 467 / LMG 4362 / NCIMB 8255 / S1) protein is Argininosuccinate lyase.